The sequence spans 436 residues: Bifunctional protein GlmU (436 aa).

The pyrophosphorylase stretch occupies residues M1 to K226. UDP-N-acetyl-alpha-D-glucosamine contacts are provided by residues L9 to G12, K23, Q75, and G82 to T83. Residue D105 coordinates Mg(2+). UDP-N-acetyl-alpha-D-glucosamine is bound by residues G138, E152, N167, and N224. N224 provides a ligand contact to Mg(2+). A linker region spans residues F227–N247. Residues G248 to K436 are N-acetyltransferase. Residues R311 and K328 each contribute to the UDP-N-acetyl-alpha-D-glucosamine site. Residue H339 is the Proton acceptor of the active site. Residues Y342 and N353 each coordinate UDP-N-acetyl-alpha-D-glucosamine. Acetyl-CoA contacts are provided by residues N362 to Y363, S381, A399, and R416.

This sequence in the N-terminal section; belongs to the N-acetylglucosamine-1-phosphate uridyltransferase family. The protein in the C-terminal section; belongs to the transferase hexapeptide repeat family. As to quaternary structure, homotrimer. It depends on Mg(2+) as a cofactor.

It is found in the cytoplasm. The catalysed reaction is alpha-D-glucosamine 1-phosphate + acetyl-CoA = N-acetyl-alpha-D-glucosamine 1-phosphate + CoA + H(+). It catalyses the reaction N-acetyl-alpha-D-glucosamine 1-phosphate + UTP + H(+) = UDP-N-acetyl-alpha-D-glucosamine + diphosphate. Its pathway is nucleotide-sugar biosynthesis; UDP-N-acetyl-alpha-D-glucosamine biosynthesis; N-acetyl-alpha-D-glucosamine 1-phosphate from alpha-D-glucosamine 6-phosphate (route II): step 2/2. It participates in nucleotide-sugar biosynthesis; UDP-N-acetyl-alpha-D-glucosamine biosynthesis; UDP-N-acetyl-alpha-D-glucosamine from N-acetyl-alpha-D-glucosamine 1-phosphate: step 1/1. The protein operates within bacterial outer membrane biogenesis; LPS lipid A biosynthesis. Catalyzes the last two sequential reactions in the de novo biosynthetic pathway for UDP-N-acetylglucosamine (UDP-GlcNAc). The C-terminal domain catalyzes the transfer of acetyl group from acetyl coenzyme A to glucosamine-1-phosphate (GlcN-1-P) to produce N-acetylglucosamine-1-phosphate (GlcNAc-1-P), which is converted into UDP-GlcNAc by the transfer of uridine 5-monophosphate (from uridine 5-triphosphate), a reaction catalyzed by the N-terminal domain. This Campylobacter fetus subsp. fetus (strain 82-40) protein is Bifunctional protein GlmU.